The following is an 86-amino-acid chain: Weak toxin 1 (86 aa).

The first 23 residues, 1 to 23 (MKTLLLTLVVVAIVCLDLGYTLT), serve as a signal peptide directing secretion. 5 disulfide bridges follow: Cys24–Cys45, Cys27–Cys32, Cys38–Cys63, Cys67–Cys78, and Cys79–Cys84.

This sequence belongs to the three-finger toxin family. Ancestral subfamily. Orphan group II sub-subfamily. In terms of tissue distribution, expressed by the venom gland.

The protein localises to the secreted. Functionally, binds with low affinity to muscular (alpha-1-beta-1-delta-epsilon/CHRNA1-CHRNB1-CHRND-CHRNE) and very low affinity to neuronal (alpha-7/CHRNA7) nicotinic acetylcholine receptor (nAChR). In Bungarus candidus (Malayan krait), this protein is Weak toxin 1.